The following is a 932-amino-acid chain: Transcriptional regulatory protein DagR (932 aa).

The Sigma-54 factor interaction domain maps to 111-343 (LIGYDRSLRD…LKSDIQFLCA (233 aa)). ATP contacts are provided by residues 141-148 (GPSGVGKT) and 210-219 (ADGGYLLLDE). The PRD 1 domain occupies 462–567 (RYGDQIEERV…KECRHYRQRI (106 aa)). H497 carries the phosphohistidine modification. A PTS EIIA type-4 domain is found at 572–708 (DCGVILIAHG…PQQENGGKVL (137 aa)). H580 serves as the catalytic Tele-phosphohistidine intermediate. The region spanning 835 to 932 (LNPQRILKEM…YFYIYELLYS (98 aa)) is the PRD 2 domain. Phosphohistidine is present on H870.

Functionally, involved in the regulation of the catabolism of D-glucosaminate. This chain is Transcriptional regulatory protein DagR (dgaR), found in Salmonella typhimurium (strain 14028s / SGSC 2262).